Reading from the N-terminus, the 665-residue chain is LisH domain-containing protein ARMC9 (665 aa).

One can recognise a LisH domain in the interval histidine 7–glycine 39. Residues glutamine 204–glutamine 235 are a coiled coil. The residue at position 582 (serine 582) is a Phosphoserine. Over residues serine 582 to lysine 603 the composition is skewed to acidic residues. Disordered stretches follow at residues serine 582 to aspartate 604 and arginine 636 to alanine 665.

Interacts with TOGARAM1, CCDC66, CEP104, CSPP1 and CEP290. Interacts with NDUFAF2.

The protein resides in the cytoplasm. Its subcellular location is the cytoskeleton. It localises to the cilium basal body. It is found in the cell projection. The protein localises to the cilium. The protein resides in the microtubule organizing center. Its subcellular location is the centrosome. It localises to the centriole. Involved in ciliogenesis. It is required for appropriate acetylation and polyglutamylation of ciliary microtubules, and regulation of cilium length. Acts as a positive regulator of hedgehog (Hh)signaling. May participate in the trafficking and/or retention of GLI2 and GLI3 proteins at the ciliary tip. This chain is LisH domain-containing protein ARMC9 (ARMC9), found in Bos taurus (Bovine).